An 805-amino-acid polypeptide reads, in one-letter code: ATP-dependent RNA helicase mak-5 (805 aa).

The span at Met-1–Thr-10 shows a compositional bias: basic residues. Disordered stretches follow at residues Met-1–Val-33 and Val-79–Thr-189. Over residues Glu-85–Glu-100 the composition is skewed to acidic residues. 3 stretches are compositionally biased toward basic and acidic residues: residues Gln-110–Ala-119, Ala-126–Lys-143, and Lys-164–Thr-189. Positions Ser-209–Ser-237 match the Q motif motif. Residues Ile-240–Ser-463 enclose the Helicase ATP-binding domain. ATP is bound at residue Ala-253–Thr-260. The DEAD box motif lies at Asp-372–Asp-375. The segment covering Phe-390–Lys-406 has biased composition (basic and acidic residues). The segment at Phe-390–Lys-435 is disordered. Residues Thr-410 to Glu-431 are compositionally biased toward acidic residues. The Helicase C-terminal domain maps to Tyr-510–Val-666. Residues Ala-729–Lys-751 are disordered.

Belongs to the DEAD box helicase family. DDX24/MAK5 subfamily.

Its subcellular location is the nucleus. The protein resides in the nucleolus. The enzyme catalyses ATP + H2O = ADP + phosphate + H(+). In terms of biological role, ATP-binding RNA helicase involved in the biogenesis of 60S ribosomal subunits and is required for the normal formation of 25S and 5.8S rRNAs. The chain is ATP-dependent RNA helicase mak-5 (mak-5) from Neurospora crassa (strain ATCC 24698 / 74-OR23-1A / CBS 708.71 / DSM 1257 / FGSC 987).